Here is a 444-residue protein sequence, read N- to C-terminus: tRNA-2-methylthio-N(6)-dimethylallyladenosine synthase (444 aa).

Positions 2–119 constitute an MTTase N-terminal domain; the sequence is KKLYIRTFGC…LPSMLNEVLT (118 aa). 6 residues coordinate [4Fe-4S] cluster: Cys11, Cys48, Cys82, Cys161, Cys165, and Cys168. In terms of domain architecture, Radical SAM core spans 147 to 379; sequence KTSSVTAFVS…QKTIDKNTER (233 aa). A TRAM domain is found at 382 to 444; that stretch reads KSMVGSVQKI…GNSLVGNLIA (63 aa).

It belongs to the methylthiotransferase family. MiaB subfamily. Monomer. The cofactor is [4Fe-4S] cluster.

Its subcellular location is the cytoplasm. The enzyme catalyses N(6)-dimethylallyladenosine(37) in tRNA + (sulfur carrier)-SH + AH2 + 2 S-adenosyl-L-methionine = 2-methylsulfanyl-N(6)-dimethylallyladenosine(37) in tRNA + (sulfur carrier)-H + 5'-deoxyadenosine + L-methionine + A + S-adenosyl-L-homocysteine + 2 H(+). Functionally, catalyzes the methylthiolation of N6-(dimethylallyl)adenosine (i(6)A), leading to the formation of 2-methylthio-N6-(dimethylallyl)adenosine (ms(2)i(6)A) at position 37 in tRNAs that read codons beginning with uridine. This is tRNA-2-methylthio-N(6)-dimethylallyladenosine synthase from Ruthia magnifica subsp. Calyptogena magnifica.